The chain runs to 196 residues: Probable malonic semialdehyde reductase RutE (196 aa).

The protein belongs to the nitroreductase family. HadB/RutE subfamily. FMN serves as cofactor.

It carries out the reaction 3-hydroxypropanoate + NADP(+) = 3-oxopropanoate + NADPH + H(+). Its function is as follows. May reduce toxic product malonic semialdehyde to 3-hydroxypropionic acid, which is excreted. This chain is Probable malonic semialdehyde reductase RutE, found in Shigella dysenteriae serotype 1 (strain Sd197).